A 289-amino-acid chain; its full sequence is ATP synthase gamma chain (289 aa).

It belongs to the ATPase gamma chain family. In terms of assembly, F-type ATPases have 2 components, CF(1) - the catalytic core - and CF(0) - the membrane proton channel. CF(1) has five subunits: alpha(3), beta(3), gamma(1), delta(1), epsilon(1). CF(0) has three main subunits: a, b and c.

It is found in the cell inner membrane. Produces ATP from ADP in the presence of a proton gradient across the membrane. The gamma chain is believed to be important in regulating ATPase activity and the flow of protons through the CF(0) complex. The protein is ATP synthase gamma chain of Pasteurella multocida (strain Pm70).